A 252-amino-acid chain; its full sequence is Flap endonuclease Xni (252 aa).

Asp105 lines the Mg(2+) pocket. One can recognise a 5'-3' exonuclease domain in the interval 162–250 (ERTQFIDYLA…LNANLSQFRL (89 aa)). K(+) is bound by residues Leu172, Ala173, Pro181, Val183, and Ile186. An interaction with DNA region spans residues 185-190 (GIGPKS).

This sequence belongs to the Xni family. It depends on Mg(2+) as a cofactor. K(+) serves as cofactor.

Functionally, has flap endonuclease activity. During DNA replication, flap endonucleases cleave the 5'-overhanging flap structure that is generated by displacement synthesis when DNA polymerase encounters the 5'-end of a downstream Okazaki fragment. In Shewanella woodyi (strain ATCC 51908 / MS32), this protein is Flap endonuclease Xni.